Consider the following 350-residue polypeptide: Dihydroorotase (350 aa).

Zn(2+) contacts are provided by H13 and H15. Substrate contacts are provided by residues 15 to 17 (HLR) and N41. Positions 99, 136, and 174 each coordinate Zn(2+). Position 99 is an N6-carboxylysine (K99). H136 contributes to the substrate binding site. Position 219 (L219) interacts with substrate. D247 lines the Zn(2+) pocket. D247 is a catalytic residue. Substrate is bound by residues H251 and A263.

Belongs to the metallo-dependent hydrolases superfamily. DHOase family. Class II DHOase subfamily. As to quaternary structure, homodimer. Zn(2+) serves as cofactor.

It catalyses the reaction (S)-dihydroorotate + H2O = N-carbamoyl-L-aspartate + H(+). It functions in the pathway pyrimidine metabolism; UMP biosynthesis via de novo pathway; (S)-dihydroorotate from bicarbonate: step 3/3. Its function is as follows. Catalyzes the reversible cyclization of carbamoyl aspartate to dihydroorotate. This chain is Dihydroorotase, found in Allorhizobium ampelinum (strain ATCC BAA-846 / DSM 112012 / S4) (Agrobacterium vitis (strain S4)).